A 254-amino-acid polypeptide reads, in one-letter code: Type III pantothenate kinase (254 aa).

6-13 is a binding site for ATP; the sequence is DVGNTNTT. Substrate is bound by residues tyrosine 100 and 107 to 110; that span reads GADR. Aspartate 109 serves as the catalytic Proton acceptor. Aspartate 129 lines the K(+) pocket. Threonine 132 provides a ligand contact to ATP. Residue threonine 184 coordinates substrate.

The protein belongs to the type III pantothenate kinase family. In terms of assembly, homodimer. It depends on NH4(+) as a cofactor. K(+) serves as cofactor.

The protein localises to the cytoplasm. It catalyses the reaction (R)-pantothenate + ATP = (R)-4'-phosphopantothenate + ADP + H(+). It functions in the pathway cofactor biosynthesis; coenzyme A biosynthesis; CoA from (R)-pantothenate: step 1/5. Catalyzes the phosphorylation of pantothenate (Pan), the first step in CoA biosynthesis. The protein is Type III pantothenate kinase of Anaeromyxobacter dehalogenans (strain 2CP-1 / ATCC BAA-258).